Reading from the N-terminus, the 240-residue chain is Ribonuclease 3 (240 aa).

Residues 10-136 enclose the RNase III domain; sequence VREFQETVGV…LIGAVYLDRG (127 aa). A Mg(2+)-binding site is contributed by Glu-49. Asp-53 is a catalytic residue. 2 residues coordinate Mg(2+): Asp-122 and Glu-125. The active site involves Glu-125. A DRBM domain is found at 163-231; the sequence is DWKTSLQELT…AESAWKAIRA (69 aa). Residues 205 to 240 are disordered; that stretch reads TYGSGEGRSKKEAEQQAAESAWKAIRAATEKAKQES. Residues 219-228 show a composition bias toward low complexity; that stretch reads QQAAESAWKA.

Belongs to the ribonuclease III family. In terms of assembly, homodimer. Requires Mg(2+) as cofactor.

The protein resides in the cytoplasm. The catalysed reaction is Endonucleolytic cleavage to 5'-phosphomonoester.. Digests double-stranded RNA. Involved in the processing of primary rRNA transcript to yield the immediate precursors to the large and small rRNAs (23S and 16S). Processes some mRNAs, and tRNAs when they are encoded in the rRNA operon. Processes pre-crRNA and tracrRNA of type II CRISPR loci if present in the organism. This is Ribonuclease 3 from Thermobifida fusca (strain YX).